A 120-amino-acid chain; its full sequence is Immunoglobulin kappa variable 2-24 (120 aa).

An N-terminal signal peptide occupies residues 1–19; sequence MRLLAQLLGLLMLWVPGSS. Residues 20 to 120 form the Ig-like domain; that stretch reads GDIVMTQTPL…YYCMQATQFP (101 aa). The interval 21 to 43 is framework-1; sequence DIVMTQTPLSSPVTLGQPASISC. Cys43 and Cys113 form a disulfide bridge. Positions 44–59 are complementarity-determining-1; the sequence is RSSQSLVHSDGNTYLS. The framework-2 stretch occupies residues 60 to 74; sequence WLQQRPGQPPRLLIY. The interval 75–81 is complementarity-determining-2; that stretch reads KISNRFS. Positions 82-113 are framework-3; sequence GVPDRFSGSGAGTDFTLKISRVEAEDVGVYYC. Positions 114–120 are complementarity-determining-3; the sequence is MQATQFP.

In terms of assembly, immunoglobulins are composed of two identical heavy chains and two identical light chains; disulfide-linked.

It is found in the secreted. Its subcellular location is the cell membrane. Its function is as follows. V region of the variable domain of immunoglobulin light chains that participates in the antigen recognition. Immunoglobulins, also known as antibodies, are membrane-bound or secreted glycoproteins produced by B lymphocytes. In the recognition phase of humoral immunity, the membrane-bound immunoglobulins serve as receptors which, upon binding of a specific antigen, trigger the clonal expansion and differentiation of B lymphocytes into immunoglobulins-secreting plasma cells. Secreted immunoglobulins mediate the effector phase of humoral immunity, which results in the elimination of bound antigens. The antigen binding site is formed by the variable domain of one heavy chain, together with that of its associated light chain. Thus, each immunoglobulin has two antigen binding sites with remarkable affinity for a particular antigen. The variable domains are assembled by a process called V-(D)-J rearrangement and can then be subjected to somatic hypermutations which, after exposure to antigen and selection, allow affinity maturation for a particular antigen. This chain is Immunoglobulin kappa variable 2-24, found in Homo sapiens (Human).